The following is a 347-amino-acid chain: S-adenosylmethionine:tRNA ribosyltransferase-isomerase (347 aa).

It belongs to the QueA family. As to quaternary structure, monomer.

It localises to the cytoplasm. The catalysed reaction is 7-aminomethyl-7-carbaguanosine(34) in tRNA + S-adenosyl-L-methionine = epoxyqueuosine(34) in tRNA + adenine + L-methionine + 2 H(+). Its pathway is tRNA modification; tRNA-queuosine biosynthesis. Transfers and isomerizes the ribose moiety from AdoMet to the 7-aminomethyl group of 7-deazaguanine (preQ1-tRNA) to give epoxyqueuosine (oQ-tRNA). The protein is S-adenosylmethionine:tRNA ribosyltransferase-isomerase of Pseudomonas aeruginosa (strain LESB58).